The sequence spans 343 residues: Cilia- and flagella-associated protein 36 (343 aa).

Serine 85 and serine 147 each carry phosphoserine. The stretch at 147-187 (SDLEQEEMKILREVLRKSKEEYDQEEERKRKKQSSEAKMEE) forms a coiled coil. The interval 165 to 188 (KEEYDQEEERKRKKQSSEAKMEEL) is disordered. Phosphoserine is present on serine 201. Composition is skewed to basic and acidic residues over residues 279–293 (QKRDKLLSMRKDTRT) and 301–323 (QKGKPTREAEEMTEKPEMTAEEK). Residues 279–323 (QKRDKLLSMRKDTRTKQIQNTEQKGKPTREAEEMTEKPEMTAEEK) form a disordered region.

This sequence belongs to the CFAP36 family. Interacts with ARL3.

It is found in the nucleus. The protein resides in the cytoplasm. The protein localises to the cell projection. Its subcellular location is the cilium. It localises to the flagellum. Functionally, may act as an effector for ARL3. This chain is Cilia- and flagella-associated protein 36, found in Mus musculus (Mouse).